The following is a 550-amino-acid chain: Carboxypeptidase Y homolog A (550 aa).

A signal peptide spans 1–18; it reads MKSLVLGLLVGSAIASGP. Residues 19 to 131 constitute a propeptide that is removed on maturation; the sequence is LQHVLHAPPD…KLAQYDLRIK (113 aa). Residues 20-39 form a disordered region; that stretch reads QHVLHAPPDPEPKPEPEPQV. 5 disulfide bridges follow: Cys-185–Cys-424, Cys-319–Cys-333, Cys-343–Cys-366, Cys-350–Cys-359, and Cys-388–Cys-394. 2 N-linked (GlcNAc...) asparagine glycosylation sites follow: Asn-203 and Asn-216. The active site involves Ser-272. An N-linked (GlcNAc...) asparagine glycan is attached at Asn-289. Residue Asn-387 is glycosylated (N-linked (GlcNAc...) asparagine). Residue Asp-463 is part of the active site. 2 N-linked (GlcNAc...) asparagine glycosylation sites follow: Asn-493 and Asn-514. Residue His-525 is part of the active site.

Belongs to the peptidase S10 family.

It is found in the vacuole. The enzyme catalyses Release of a C-terminal amino acid with broad specificity.. In terms of biological role, vacuolar carboxypeptidase involved in degradation of small peptides. Digests preferentially peptides containing an aliphatic or hydrophobic residue in P1' position, as well as methionine, leucine or phenylalanine in P1 position of ester substrate. The chain is Carboxypeptidase Y homolog A (CPYA) from Paracoccidioides brasiliensis (strain Pb03).